The chain runs to 229 residues: Triosephosphate isomerase (229 aa).

Position 6–8 (6–8 (NLK)) interacts with substrate. Catalysis depends on histidine 85, which acts as the Electrophile. The Proton acceptor role is filled by glutamate 152. 2 residues coordinate substrate: glycine 158 and serine 188.

It belongs to the triosephosphate isomerase family. In terms of assembly, homodimer.

It is found in the cytoplasm. The catalysed reaction is D-glyceraldehyde 3-phosphate = dihydroxyacetone phosphate. Its pathway is carbohydrate biosynthesis; gluconeogenesis. It participates in carbohydrate degradation; glycolysis; D-glyceraldehyde 3-phosphate from glycerone phosphate: step 1/1. Its function is as follows. Involved in the gluconeogenesis. Catalyzes stereospecifically the conversion of dihydroxyacetone phosphate (DHAP) to D-glyceraldehyde-3-phosphate (G3P). In Campylobacter curvus (strain 525.92), this protein is Triosephosphate isomerase.